Reading from the N-terminus, the 125-residue chain is MPKKSFQRTERISVQIRRDLGAFVQAAVRDHGLPSMSVSDVEVTRDMAHAKVFVTVLQAERSFEAVAGLKALARELRMQLAQTMRLRFVPELHFHYDDSLDRGERINTLLRDLIPPADAEKDESG.

It belongs to the RbfA family. In terms of assembly, monomer. Binds 30S ribosomal subunits, but not 50S ribosomal subunits or 70S ribosomes.

The protein resides in the cytoplasm. Its function is as follows. One of several proteins that assist in the late maturation steps of the functional core of the 30S ribosomal subunit. Associates with free 30S ribosomal subunits (but not with 30S subunits that are part of 70S ribosomes or polysomes). Required for efficient processing of 16S rRNA. May interact with the 5'-terminal helix region of 16S rRNA. The protein is Ribosome-binding factor A of Xylella fastidiosa (strain M12).